We begin with the raw amino-acid sequence, 1105 residues long: Integrator complex subunit 2 (1105 aa).

Residues 822–842 form a helical membrane-spanning segment; sequence FVFCSPYLLMILLRILKGSLA.

Belongs to the Integrator subunit 2 family. As to quaternary structure, belongs to the multiprotein complex Integrator, at least composed of IntS1, IntS2, IntS3, IntS4, omd/IntS5, IntS6, defl/IntS7, IntS8, IntS9, IntS10, IntS11, IntS12, asun/IntS13, IntS14 and IntS15. The core complex associates with protein phosphatase 2A subunits mts/PP2A and Pp2A-29B, to form the Integrator-PP2A (INTAC) complex.

Its subcellular location is the nucleus membrane. The protein localises to the nucleus. Component of the integrator complex, a multiprotein complex that terminates RNA polymerase II (Pol II) transcription in the promoter-proximal region of genes. The integrator complex provides a quality checkpoint during transcription elongation by driving premature transcription termination of transcripts that are unfavorably configured for transcriptional elongation: the complex terminates transcription by (1) catalyzing dephosphorylation of the C-terminal domain (CTD) of Pol II subunit Polr2A/Rbp1 and Spt5, and (2) degrading the exiting nascent RNA transcript via endonuclease activity. The integrator complex is also involved in the 3'-end processing of the U7 snRNA, and also the spliceosomal snRNAs U1, U2, U4 and U5. The protein is Integrator complex subunit 2 of Drosophila melanogaster (Fruit fly).